Here is a 588-residue protein sequence, read N- to C-terminus: MRTHFCGLVDETLIGQTVTLAGWTDVARNLGGVCFIDLRDHEGIVQVTVEPAEGDANSAEVFKVAASLGYEDVLQVEGVVRARHAVNDKIRTGKVEVIATRITILNKAAPLPFHAHENPGEDTRLKYRYLDLRRPEMQRMQRTRIKLVQALRRHLDARDFQDIETPILTKATPEGARDFLVPARMHPGEFYALPQSPQLFKQILMVAGFDRYYQIARCFRDEALRADRQLEFTQLDMEFAFVRERDVQDFVEDMIRAIFKEVVDVELAAQFPRMTWAEAMRRYGSDKPDLRIALELVDVAELVKTSEFPVFAAAANDADGRVAALRIPGGATLSRKQIDDYAAHAAKYGAKGLAYSKLSETGEVSSPIAKFFGEEAFAALLAHVGAANGDIVFFGAGSYNKVSDFMGALRLKAGKDFGLVAAGWAPLWVTDFPMFEWDEEAQRYVALHHPFTAPAVDDIADLRANARTAVSRGYDMVLNGNEIGGGSIRIHRPDMQSAVFELLGIGAEEARAKFGFLLDALNYGAPPHGGIAFGIDRIAALMAGTESIRDVIPFPKTTGAQDLMTDAPSPIAAEQLAEVHVQVRPKQA.

An L-aspartate-binding site is contributed by E174. The tract at residues 198-201 (QLFK) is aspartate. L-aspartate is bound at residue R220. Residues 220 to 222 (RDE) and Q229 contribute to the ATP site. H448 serves as a coordination point for L-aspartate. E482 is a binding site for ATP. Residue R489 coordinates L-aspartate. 534–537 (GIDR) is an ATP binding site.

This sequence belongs to the class-II aminoacyl-tRNA synthetase family. Type 1 subfamily. Homodimer.

The protein resides in the cytoplasm. The catalysed reaction is tRNA(Asp) + L-aspartate + ATP = L-aspartyl-tRNA(Asp) + AMP + diphosphate. Its function is as follows. Catalyzes the attachment of L-aspartate to tRNA(Asp) in a two-step reaction: L-aspartate is first activated by ATP to form Asp-AMP and then transferred to the acceptor end of tRNA(Asp). In Xanthomonas campestris pv. campestris (strain 8004), this protein is Aspartate--tRNA ligase.